A 385-amino-acid polypeptide reads, in one-letter code: Cell division protein FtsZ (385 aa).

Residues 37–41 (GGGSN), 125–127 (GTG), Glu156, Lys160, and Asp204 each bind GTP.

It belongs to the FtsZ family. In terms of assembly, homodimer. Polymerizes to form a dynamic ring structure in a strictly GTP-dependent manner. Interacts directly with several other division proteins.

The protein localises to the cytoplasm. Its function is as follows. Essential cell division protein that forms a contractile ring structure (Z ring) at the future cell division site. The regulation of the ring assembly controls the timing and the location of cell division. One of the functions of the FtsZ ring is to recruit other cell division proteins to the septum to produce a new cell wall between the dividing cells. Binds GTP and shows GTPase activity. The sequence is that of Cell division protein FtsZ from Helicobacter pylori (strain J99 / ATCC 700824) (Campylobacter pylori J99).